The primary structure comprises 292 residues: F-box protein SKIP28 (292 aa).

The F-box; degenerate domain occupies 21–79 (LIVLPYLHSLFELLSMIRVSRSLRDAIRDETALWTKLVIEPPLSSRLTDDILSEFSSKS).

In terms of assembly, part of a SCF (ASK-cullin-F-box) protein ligase complex. Interacts with SKP1A/ASK1 and CUL1.

Its pathway is protein modification; protein ubiquitination. In terms of biological role, component of SCF(ASK-cullin-F-box) E3 ubiquitin ligase complexes, which may mediate the ubiquitination and subsequent proteasomal degradation of target proteins. Required during the endosperm development in embryos. This Arabidopsis thaliana (Mouse-ear cress) protein is F-box protein SKIP28 (SKIP28).